A 425-amino-acid chain; its full sequence is MHKILVRSNHKPLIGKIKINGSKNAVLPIMAASLFSNSSITLHNVPDLIDVHLMSELLKSLGAEVNFICNKDYKANHTLEIDCSNINNHLISHEIASRLRASFLMLGPMLSRFGRVSTVFPGGCNIGKRPVDIHIKALEAMGAKIEIDSCNITATTKGKLQGKEITFEKVSVGATENIIMSATLAEGVTTINNAATEPEVLDLIEFLKIMGANIEVNNTKITIEGVEALNGCEHKIIPDRIEAGTYALAAIITDGELKLEGVSLSDIECIANELKTIGARVELHDDGIIISRKNGSIKSAHVATNPYPNFPSDMQPQLMSAMSIAGGISIIEENVFESRFAHANELRKLGANISIEKNKATISGIKSLSGANLHANDLRSTAALILASLVAKGETTINNSHHLWRGYEAMHEKLNSCGADIFVSS.

Residue 23-24 coordinates phosphoenolpyruvate; it reads KN. Arg-100 contacts UDP-N-acetyl-alpha-D-glucosamine. Residue Cys-124 is the Proton donor of the active site. Cys-124 is subject to 2-(S-cysteinyl)pyruvic acid O-phosphothioketal. UDP-N-acetyl-alpha-D-glucosamine is bound by residues 169–172, Asp-313, and Val-335; that span reads KVSV.

This sequence belongs to the EPSP synthase family. MurA subfamily.

It localises to the cytoplasm. It catalyses the reaction phosphoenolpyruvate + UDP-N-acetyl-alpha-D-glucosamine = UDP-N-acetyl-3-O-(1-carboxyvinyl)-alpha-D-glucosamine + phosphate. Its pathway is cell wall biogenesis; peptidoglycan biosynthesis. Functionally, cell wall formation. Adds enolpyruvyl to UDP-N-acetylglucosamine. The sequence is that of UDP-N-acetylglucosamine 1-carboxyvinyltransferase from Wolbachia pipientis subsp. Culex pipiens (strain wPip).